The chain runs to 212 residues: Maleylacetoacetate isomerase (212 aa).

The region spanning 1-83 (MKLYTYYRST…YLEERYPQPA (83 aa)) is the GST N-terminal domain. Residues 88 to 211 (DPLRRARERG…HPANQPDTPA (124 aa)) enclose the GST C-terminal domain.

This sequence belongs to the GST superfamily. Zeta family.

It catalyses the reaction 4-maleylacetoacetate = 4-fumarylacetoacetate. Its pathway is amino-acid degradation; L-phenylalanine degradation; acetoacetate and fumarate from L-phenylalanine: step 5/6. The sequence is that of Maleylacetoacetate isomerase (maiA) from Pseudomonas aeruginosa (strain ATCC 15692 / DSM 22644 / CIP 104116 / JCM 14847 / LMG 12228 / 1C / PRS 101 / PAO1).